A 63-amino-acid polypeptide reads, in one-letter code: uncharacterized protein (63 aa).

This is an uncharacterized protein from Avena byzantina (Oat).